A 743-amino-acid chain; its full sequence is MSKTSCFLKKYRLILLWCILGIAYILFWTHRISKAFASVSSTSDSTVHLFERGNTLNDSNDQILLTCNDIKNITPANQCRFAKAYCKGEASGFFDYVEFYFCTINSLRFPVLSIIVGWLIFLFITIGISASDFFSTNLVTISWLLQLPDSVVGVTFLALGNGSPDILSTFAAVRVNSGGMAIGELLGSAFFIVAIVAGSVCLIKPFKIPRRHFLRDVAFLTGTILLVIMFVLHDGSLSIWQSLVMILYYLLYVLFVFFSGSSGVSVVITDENYLPVSLPVYSPVLNSFDDSDSYSSTDSELSEEAFLLPAQASRKTQKIHYINDNDPSNSYSSYQHSHVHDFIHKNNTHSNRVLSQSSGPIVRPSLLAALDFRSSNEEQHPGLRSLDPLNIQDGDLTMHPMHIRHSQSDFYPSGINTPVSGINYPNLGFSANNSVQSLVSEIFRHPTHTDEDFPLPSPSLSSLLFPTLRNFAKKSWYEKLMDVLAVPSVLIFTLALPVYQCPRLAVDPIYHMDVSNCNPSKPTWSRKLRLLQCVFVPFAFVTFSITGGNRLYIYAASSVFSILCITALYYYTDEEKPPKFLPWVSFIGFVLGIIWISTIANEVVGILRALGVIFNLNESILGLTVFAAGNSLSDLIADIMIARSGFPEMAMGGVFGGPTLNILIGIGISSFYSSISNHGNDSVIEIPHSLSITAYFLLACLLLLLIYVPLNRFRVNRVLGLLLFILYIVGTSTNIVVELLKDK.

Helical transmembrane passes span 13-33 (LILL…HRIS), 109-129 (FPVL…IGIS), 138-158 (LVTI…TFLA), 182-202 (IGEL…SVCL), 213-233 (FLRD…FVLH), 239-258 (IWQS…FVFF), 528-548 (LRLL…ITGG), 551-571 (LYIY…LYYY), 580-600 (FLPW…STIA), 609-629 (ALGV…FAAG), 649-669 (MAMG…IGIS), 690-710 (LSIT…YVPL), and 718-738 (VLGL…IVVE).

It belongs to the Ca(2+):cation antiporter (CaCA) (TC 2.A.19) family.

The protein resides in the endoplasmic reticulum membrane. Its function is as follows. Putative cation exchanger. The sequence is that of Putative cation exchanger C3A12.06c from Schizosaccharomyces pombe (strain 972 / ATCC 24843) (Fission yeast).